The following is a 360-amino-acid chain: Phosphoserine aminotransferase (360 aa).

Residue Arg-42 participates in L-glutamate binding. Residues Ala-76–Arg-77, Trp-102, Thr-153, Asp-172, and Gln-195 contribute to the pyridoxal 5'-phosphate site. Residue Lys-196 is modified to N6-(pyridoxal phosphate)lysine. Asn-237–Thr-238 is a binding site for pyridoxal 5'-phosphate.

It belongs to the class-V pyridoxal-phosphate-dependent aminotransferase family. SerC subfamily. In terms of assembly, homodimer. It depends on pyridoxal 5'-phosphate as a cofactor.

Its subcellular location is the cytoplasm. It carries out the reaction O-phospho-L-serine + 2-oxoglutarate = 3-phosphooxypyruvate + L-glutamate. The catalysed reaction is 4-(phosphooxy)-L-threonine + 2-oxoglutarate = (R)-3-hydroxy-2-oxo-4-phosphooxybutanoate + L-glutamate. It functions in the pathway amino-acid biosynthesis; L-serine biosynthesis; L-serine from 3-phospho-D-glycerate: step 2/3. Its pathway is cofactor biosynthesis; pyridoxine 5'-phosphate biosynthesis; pyridoxine 5'-phosphate from D-erythrose 4-phosphate: step 3/5. Its function is as follows. Catalyzes the reversible conversion of 3-phosphohydroxypyruvate to phosphoserine and of 3-hydroxy-2-oxo-4-phosphonooxybutanoate to phosphohydroxythreonine. This Photobacterium profundum (strain SS9) protein is Phosphoserine aminotransferase.